The following is a 478-amino-acid chain: Cytochrome c-552 (478 aa).

A signal peptide spans 1–26 (MARKTLRARRFFSLIFPFFFITSVYA). Position 94 (H94) interacts with heme c. Residues C122, C125, and K126 each coordinate heme. Heme c contacts are provided by C160, C163, H164, C209, C212, and H213. Residues E215, Y216, K261, and Q263 each coordinate Ca(2+). Substrate is bound at residue Y216. H264 is a substrate binding site. Residues H275, C282, C285, H286, H301, C314, C317, H318, and H393 each coordinate heme c.

This sequence belongs to the cytochrome c-552 family. It depends on Ca(2+) as a cofactor. Heme c serves as cofactor.

It localises to the periplasm. It carries out the reaction 6 Fe(III)-[cytochrome c] + NH4(+) + 2 H2O = 6 Fe(II)-[cytochrome c] + nitrite + 8 H(+). It functions in the pathway nitrogen metabolism; nitrate reduction (assimilation). In terms of biological role, catalyzes the reduction of nitrite to ammonia, consuming six electrons in the process. The chain is Cytochrome c-552 from Salmonella typhi.